Reading from the N-terminus, the 898-residue chain is Serine/threonine-protein kinase TAO3 (898 aa).

Positions 24–277 (FIGLHEIGHG…SAELLRHDFV (254 aa)) constitute a Protein kinase domain. ATP contacts are provided by residues 30-38 (IGHGSFGAV) and Lys-53. The Proton acceptor role is filled by Asp-147. 2 disordered regions span residues 316–362 (TRNG…SQSS) and 405–425 (DEAG…VQSQ). A Phosphoserine; by ATM modification is found at Ser-324. Residues Ser-331, Ser-343, Ser-346, and Ser-349 each carry the phosphoserine modification. A compositionally biased stretch (polar residues) spans 334–351 (GTSLNREMDSLGSNHSIP). Low complexity predominate over residues 352–362 (SMSVSTGSQSS). At Thr-357 the chain carries Phosphothreonine. Ser-359 is subject to Phosphoserine. Residues 405–416 (DEAGHGDPRPEP) are compositionally biased toward basic and acidic residues. Ser-442 carries the post-translational modification Phosphoserine. Coiled-coil stretches lie at residues 452 to 502 (EQEN…THAN), 548 to 649 (FLES…HAML), and 754 to 879 (LKTL…DMES). Residues 565-596 (EEMNEDHSTPKKEKQERISKHKENLQHTQAEE) are disordered. Lys-830 is subject to N6-acetyllysine.

This sequence belongs to the protein kinase superfamily. STE Ser/Thr protein kinase family. STE20 subfamily. As to quaternary structure, self-associates. Interacts with ERN1 and TRAF2. Interaction with TRAF2 is facilitated under ER stress conditions, such as treatment with tunicamycin, and may promote TRAF2 phosphorylation. Interacts (via N-terminus) with STK25; the interaction promotes STK25 abundance at the level of protein expression and/or stability. (Microbial infection) Interacts with herpes simplex virus 1 UL37 protein. In terms of processing, autophosphorylated. Phosphorylation at Ser-324 by ATM following DNA damage is required for activation of the p38/MAPK14 stress-activated MAPK cascade. Phosphorylated at Ser-324 and on Tyr residues during T cell activation. Phosphorylated by LRRK2. Ubiquitously expressed at a low level, and highly expressed in peripheral blood leukocytes (PBLs), thymus, spleen, kidney, skeletal muscle, heart and liver.

It is found in the cytoplasm. Its subcellular location is the cell membrane. The protein resides in the membrane raft. It localises to the lipid droplet. It carries out the reaction L-seryl-[protein] + ATP = O-phospho-L-seryl-[protein] + ADP + H(+). The catalysed reaction is L-threonyl-[protein] + ATP = O-phospho-L-threonyl-[protein] + ADP + H(+). Functionally, serine/threonine-protein kinase that acts as a regulator of the p38/MAPK14 stress-activated MAPK cascade and of the MAPK8/JNK cascade. In response to DNA damage, involved in the G2/M transition DNA damage checkpoint by activating the p38/MAPK14 stress-activated MAPK cascade, probably by mediating phosphorylation of upstream MAP2K3 and MAP2K6 kinases. Inhibits basal activity of the MAPK8/JNK cascade and diminishes its activation in response to epidermal growth factor (EGF). Positively regulates canonical T cell receptor (TCR) signaling by preventing early PTPN6/SHP1-mediated inactivation of LCK, ensuring sustained TCR signaling that is required for optimal activation and differentiation of T cells. Phosphorylates PTPN6/SHP1 on 'Thr-394', leading to its polyubiquitination and subsequent proteasomal degradation. Required for cell surface expression of metalloprotease ADAM10 on type 1 transitional B cells which is necessary for their NOTCH-mediated development into marginal zone B cells. Also required for the NOTCH-mediated terminal differentiation of splenic conventional type 2 dendritic cells. Positively regulates osteoblast differentiation by acting as an upstream activator of the JNK pathway. Promotes JNK signaling in hepatocytes and positively regulates hepatocyte lipid storage by inhibiting beta-oxidation and triacylglycerol secretion while enhancing lipid synthesis. Restricts age-associated inflammation by negatively regulating differentiation of macrophages and their production of pro-inflammatory cytokines. Plays a role in negatively regulating the abundance of regulatory T cells in white adipose tissue. The chain is Serine/threonine-protein kinase TAO3 (TAOK3) from Homo sapiens (Human).